Consider the following 85-residue polypeptide: METVLSFSAIAVAIIVGLCAVGTAIGFAVLGGKFLEGAARQPEMAPMLQVKMFIIAGLLDAVPMIGIVIALLFTFANPFVGQLAG.

The next 2 membrane-spanning stretches (helical) occupy residues 10 to 30 (IAVA…FAVL) and 53 to 73 (FIIA…ALLF).

Belongs to the ATPase C chain family. In terms of assembly, F-type ATPases have 2 components, F(1) - the catalytic core - and F(0) - the membrane proton channel. F(1) has five subunits: alpha(3), beta(3), gamma(1), delta(1), epsilon(1). F(0) has three main subunits: a(1), b(2) and c(10-14). The alpha and beta chains form an alternating ring which encloses part of the gamma chain. F(1) is attached to F(0) by a central stalk formed by the gamma and epsilon chains, while a peripheral stalk is formed by the delta and b chains.

The protein localises to the cell inner membrane. Its function is as follows. F(1)F(0) ATP synthase produces ATP from ADP in the presence of a proton or sodium gradient. F-type ATPases consist of two structural domains, F(1) containing the extramembraneous catalytic core and F(0) containing the membrane proton channel, linked together by a central stalk and a peripheral stalk. During catalysis, ATP synthesis in the catalytic domain of F(1) is coupled via a rotary mechanism of the central stalk subunits to proton translocation. Functionally, key component of the F(0) channel; it plays a direct role in translocation across the membrane. A homomeric c-ring of between 10-14 subunits forms the central stalk rotor element with the F(1) delta and epsilon subunits. The chain is ATP synthase subunit c from Vibrio cholerae serotype O1 (strain ATCC 39315 / El Tor Inaba N16961).